The chain runs to 711 residues: Ferric reductase transmembrane component 3 (711 aa).

An N-terminal signal peptide occupies residues 1 to 20 (MYWVLLCGSILLCCLSGASA). The Extracellular segment spans residues 21 to 166 (SPAKTKMYGK…YANYDIGHTY (146 aa)). 4 N-linked (GlcNAc...) asparagine glycosylation sites follow: asparagine 85, asparagine 108, asparagine 120, and asparagine 134. The chain crosses the membrane as a helical span at residues 167-187 (GGIICAYFVGVMILASILHYL). Over 188 to 237 (SYTPFKTALFKQRLVRYVRRYLTIPTIWGKHASSFSYLKIFTGFLPTRSE) the chain is Cytoplasmic. The helical transmembrane segment at 238 to 258 (GVIILGYLVLHTVFLAYGYQY) threads the bilayer. The Extracellular segment spans residues 259-280 (DPYNLIFDSRREQIARYVADRS). Positions 280-414 (SGVLAFAHFP…SGIEWIYAAI (135 aa)) constitute a Ferric oxidoreductase domain. A helical transmembrane segment spans residues 281–301 (GVLAFAHFPLIALFAGRNNFL). At 302 to 321 (EFISGVKYTSFIMFHKWLGR) the chain is on the cytoplasmic side. The heme site is built by histidine 316 and histidine 330. Residues 322–341 (MMFLDAVIHGAAYTSYSVFY) traverse the membrane as a helical segment. Topologically, residues 342–353 (KDWAASKEETYW) are extracellular. A helical transmembrane segment spans residues 354-374 (QFGVAALCIVGVMVFFSLAMF). Over 375 to 376 (RK) the chain is Cytoplasmic. Residues 377–397 (FFYEAFLFLHIVLGALFFYTC) form a helical membrane-spanning segment. A heme-binding site is contributed by histidine 386. A topological domain (extracellular) is located at residue tryptophan 398. The chain crosses the membrane as a helical span at residues 399–419 (EHVVELSGIEWIYAAIAIWTI). Residue histidine 400 coordinates heme. The region spanning 415-534 (AIWTIDRLIR…EGPYGSSSPV (120 aa)) is the FAD-binding FR-type domain. Topologically, residues 420–711 (DRLIRIVRVS…IEYFEEYQSW (292 aa)) are cytoplasmic. 479-485 (HPFTVLD) provides a ligand contact to FAD. NADP(+) contacts are provided by residues 526–529 (GPYG) and 677–678 (CG).

This sequence belongs to the ferric reductase (FRE) family. It depends on FAD as a cofactor. Heme serves as cofactor.

It is found in the cell membrane. It catalyses the reaction 2 a Fe(II)-siderophore + NADP(+) + H(+) = 2 a Fe(III)-siderophore + NADPH. Its function is as follows. Siderophore-iron reductase responsible for reducing extracellular iron prior to import. Catalyzes the reductive uptake of Fe(3+) bound to di- and trihydroxamate siderophores. Fe(3+) is reduced to Fe(2+), which then dissociates from the siderophore and can be imported by the high-affinity Fe(2+) transport complex in the plasma membrane. The chain is Ferric reductase transmembrane component 3 (FRE3) from Saccharomyces cerevisiae (strain ATCC 204508 / S288c) (Baker's yeast).